A 181-amino-acid polypeptide reads, in one-letter code: c-Myc-binding protein homolog (181 aa).

The segment covering 111 to 127 has biased composition (low complexity); that stretch reads ESTEAAEQQQQQQQQEN. Disordered regions lie at residues 111-145 and 159-181; these read ESTE…VAEI and VVTT…GSSE. Polar residues predominate over residues 168-181; that stretch reads PSPTVQAEASGSSE.

Belongs to the AMY1 family.

It localises to the nucleus. The sequence is that of c-Myc-binding protein homolog from Drosophila melanogaster (Fruit fly).